Here is a 669-residue protein sequence, read N- to C-terminus: Dynamin-related protein 4C (669 aa).

Residues 1 to 21 (MVKKKVATKKNSPSLAIAKKK) are disordered. The region spanning 62-323 (GIHLPTIVVV…QSSMIARCLP (262 aa)) is the Dynamin-type G domain. Residues 72-79 (GDQSSGKS) form a G1 motif region. 72–79 (GDQSSGKS) provides a ligand contact to GTP. Residues 97 to 99 (CTR) form a G2 motif region. The tract at residues 171-174 (DLPG) is G3 motif. GTP contacts are provided by residues 171–175 (DLPGI) and 240–243 (TKAD). The G4 motif stretch occupies residues 240 to 243 (TKAD). A region of interest (G5 motif) is located at residue glutamate 273. Residues 575–669 (AFDMKMRITS…AVAAIVDQNC (95 aa)) form the GED domain.

It belongs to the TRAFAC class dynamin-like GTPase superfamily. Dynamin/Fzo/YdjA family.

The protein localises to the cytoplasm. It localises to the cytoskeleton. Functionally, putative microtubule-associated force-producing protein, able to bind and hydrolyze GTP. In Arabidopsis thaliana (Mouse-ear cress), this protein is Dynamin-related protein 4C (DRP4C).